The primary structure comprises 599 residues: Sulfite reductase [NADPH] flavoprotein alpha-component (599 aa).

The Flavodoxin-like domain occupies 64-202; sequence ITIISASQTG…AASEWRARVV (139 aa). Residues 70–75, 117–120, and 153–162 each bind FMN; these read SQTGNA, STQG, and LGDSSYEFFC. The region spanning 234-448 is the FAD-binding FR-type domain; sequence DAPLVASLSV…IEHNDNFRLP (215 aa). Residues Thr322, Ala356, 386-389, 404-406, Tyr410, and 419-422 contribute to the FAD site; these read RLYS, TVG, and GGAS. Residues 519–520, 525–529, and Asp561 contribute to the NADP(+) site; these read SR and KVYVQ. Position 599 (Tyr599) interacts with FAD.

Belongs to the NADPH-dependent sulphite reductase flavoprotein subunit CysJ family. It in the N-terminal section; belongs to the flavodoxin family. This sequence in the C-terminal section; belongs to the flavoprotein pyridine nucleotide cytochrome reductase family. Alpha(8)-beta(8). The alpha component is a flavoprotein, the beta component is a hemoprotein. It depends on FAD as a cofactor. Requires FMN as cofactor.

The enzyme catalyses hydrogen sulfide + 3 NADP(+) + 3 H2O = sulfite + 3 NADPH + 4 H(+). Its pathway is sulfur metabolism; hydrogen sulfide biosynthesis; hydrogen sulfide from sulfite (NADPH route): step 1/1. Its function is as follows. Component of the sulfite reductase complex that catalyzes the 6-electron reduction of sulfite to sulfide. This is one of several activities required for the biosynthesis of L-cysteine from sulfate. The flavoprotein component catalyzes the electron flow from NADPH -&gt; FAD -&gt; FMN to the hemoprotein component. In Escherichia coli (strain K12), this protein is Sulfite reductase [NADPH] flavoprotein alpha-component.